We begin with the raw amino-acid sequence, 216 residues long: MSLPMLQVALDNQTMASAYETTRLIAEEVDIIEVGTILCVGEGVRAVRDLKALYPHKIVLADAKIADAGKILSRMCFEANADWVTVICCADINTAKGALDVAKEFNGDVQIELTGYWTWEQAQQWRDAGIQQVVYHRSRDAQAAGVAWGEADITAIKRLSDMGFKVTVTGGLALEDLPLFKGIPIHVFIAGRSIRDAASPVEAARQFKRSIAELWG.

Residue Asp-11 participates in substrate binding. The Mg(2+) site is built by Glu-33 and Asp-62. Arg-192 is a substrate binding site.

It belongs to the HPS/KGPDC family. KGPDC subfamily. In terms of assembly, homodimer. It depends on Mg(2+) as a cofactor.

The catalysed reaction is 3-dehydro-L-gulonate 6-phosphate + H(+) = L-xylulose 5-phosphate + CO2. The protein operates within cofactor degradation; L-ascorbate degradation; D-xylulose 5-phosphate from L-ascorbate: step 2/4. Catalyzes the decarboxylation of 3-keto-L-gulonate-6-P into L-xylulose-5-P. Is involved in the anaerobic L-ascorbate utilization. In Escherichia fergusonii (strain ATCC 35469 / DSM 13698 / CCUG 18766 / IAM 14443 / JCM 21226 / LMG 7866 / NBRC 102419 / NCTC 12128 / CDC 0568-73), this protein is 3-keto-L-gulonate-6-phosphate decarboxylase UlaD.